A 396-amino-acid chain; its full sequence is Lipid-A-disaccharide synthase (396 aa).

This sequence belongs to the LpxB family.

It carries out the reaction a lipid X + a UDP-2-N,3-O-bis[(3R)-3-hydroxyacyl]-alpha-D-glucosamine = a lipid A disaccharide + UDP + H(+). The protein operates within bacterial outer membrane biogenesis; LPS lipid A biosynthesis. Its function is as follows. Condensation of UDP-2,3-diacylglucosamine and 2,3-diacylglucosamine-1-phosphate to form lipid A disaccharide, a precursor of lipid A, a phosphorylated glycolipid that anchors the lipopolysaccharide to the outer membrane of the cell. This Hahella chejuensis (strain KCTC 2396) protein is Lipid-A-disaccharide synthase.